A 214-amino-acid polypeptide reads, in one-letter code: MEKFILNVEKRERTGKGIARQLRSKGIIPCVIYKNGQSTPVQIPTKELYTFMNIATREKLFVTLKLDGQEKQAILQDYQVDPVTGKLLHVDFMEVSATEKIRVTIPVVLIGEPIGVKQDKGVLQHGISEIEIEAIPEKIPGHIEVDVSHLEVGDAVHVSDIKFEEGIKVISNPEEVIATVTVEEEEAEVAPSIEETVEPEVIKKGKKAEEEEEK.

The interval 187 to 214 (AEVAPSIEETVEPEVIKKGKKAEEEEEK) is disordered. A compositionally biased stretch (basic and acidic residues) spans 200-214 (EVIKKGKKAEEEEEK).

The protein belongs to the bacterial ribosomal protein bL25 family. CTC subfamily. In terms of assembly, part of the 50S ribosomal subunit; part of the 5S rRNA/L5/L18/L25 subcomplex. Contacts the 5S rRNA. Binds to the 5S rRNA independently of L5 and L18.

This is one of the proteins that binds to the 5S RNA in the ribosome where it forms part of the central protuberance. This Thermodesulfovibrio yellowstonii (strain ATCC 51303 / DSM 11347 / YP87) protein is Large ribosomal subunit protein bL25.